We begin with the raw amino-acid sequence, 93 residues long: Small ribosomal subunit protein uS19 (93 aa).

Belongs to the universal ribosomal protein uS19 family.

Protein S19 forms a complex with S13 that binds strongly to the 16S ribosomal RNA. The chain is Small ribosomal subunit protein uS19 from Clostridioides difficile (strain 630) (Peptoclostridium difficile).